The following is a 299-amino-acid chain: Ribosomal RNA small subunit methyltransferase H (299 aa).

S-adenosyl-L-methionine contacts are provided by residues 32–34 (AGH), D52, F79, D100, and Q107.

Belongs to the methyltransferase superfamily. RsmH family.

Its subcellular location is the cytoplasm. It carries out the reaction cytidine(1402) in 16S rRNA + S-adenosyl-L-methionine = N(4)-methylcytidine(1402) in 16S rRNA + S-adenosyl-L-homocysteine + H(+). Functionally, specifically methylates the N4 position of cytidine in position 1402 (C1402) of 16S rRNA. This Mycoplasmopsis pulmonis (strain UAB CTIP) (Mycoplasma pulmonis) protein is Ribosomal RNA small subunit methyltransferase H.